A 530-amino-acid polypeptide reads, in one-letter code: Capsid protein VP1 (530 aa).

A disordered region spans residues 1-20 (MMMASKDATSSVDGASGAGQ). Residues 1–225 (MMMASKDATS…FLFLVPPTVE (225 aa)) form a shell domain region. The P1 sub-domain 1 stretch occupies residues 226-278 (QKTRPFTLPNLPLSSLSNSRAPLPISSMGISPDNVQSVQFQNGRCTLDGRLVG). The segment at 226-530 (QKTRPFTLPN…SARGRLGLRR (305 aa)) is protruding domain. The segment at 279–405 (TTPVSLSHVA…GSSITEATHL (127 aa)) is P2 sub-domain. Positions 406–530 (APSVYPPGFG…SARGRLGLRR (125 aa)) are P1 sub-domain 2. Residues 523–530 (RGRLGLRR) form a plays a role in binding to host histo-blood group structures antigens and in the formation of P-particles region.

It belongs to the caliciviridae capsid protein family. As to quaternary structure, homodimer. Homomultimer. Interacts with the minor capsid protein VP2. Interacts (via C-terminus) with host type I histo-blood group structures antigens at the surface of target cells. In terms of processing, may be cleaved by host protease to generate soluble capsid protein. Assembled capsid cannot be cleaved.

It is found in the virion. The protein localises to the host cytoplasm. In terms of biological role, capsid protein self assembles to form an icosahedral capsid with a T=3 symmetry, about 38 nm in diameter, and consisting of 180 capsid proteins. A smaller form of capsid with a diameter of 23 nm might be capsid proteins assembled as icosahedron with T=1 symmetry. The capsid encapsulates the genomic RNA and is decorated with VP2 proteins. Attaches virion to target cells by binding histo-blood group antigens (HBGAs) present on gastroduodenal epithelial cells. The soluble capsid protein may play a role in viral immunoevasion. The polypeptide is Capsid protein VP1 (Norovirus (strain Human/NoV/United States/Norwalk/1968/GI) (Hu/NV/NV/1968/US)).